We begin with the raw amino-acid sequence, 670 residues long: MLFSRASKIRVSQLMRRLQSTAVGRAASRPEMLQLEAKLADVMKDKKDLGRVMAALRETVQGVVESGGLSDRTLLRSNSVTNDLGKLLEQSNKQLRGEIETDTVPPTPYEILVTLVDLKLARRTHYEQVMQYLLANGDAEAALGVWVKYLEFVAQMPQREGAEETYVMAYASIAYFFLGAADVDVLLQLLNREAGQYKDIPLFRIEQLQSQIGLSESNLTKVRENLAAIHKQLLVDKKGYFLDVILPECYYPLLHSYYKRYSDLEGLVDEDLAAGFMINFSRIGKHTLAMKCYNDAVKKAGGKPGVVLKNALLTVVARMGETAINRVNATRRIEAVWNSYFREDDVIDVSSYKALLNALIILKRFDKVQSVWELDIPEELKKDHTLLQTYLEGCAHRTNVSLPELLKQLPEAVTDVNLANAVLLKMANTSGSASMFDSFYDKTFKGPGSLRPTPLTLATRLLMGYATASDPAKFNFFDHTPIPRTMKNAVAEEFLKICSDSEAIKRFYESSKASLKLDVFSSRRVGKIIEASFNIGDWKTAEAIFKDHITTSNAKSQINVHTLLPLIAGFSNLILRNNEPSFLSKLDTYWQLASRVYKTIPFEFLNKTATAVASLCLKEAKLTDEHYNFINAVVMSELARSKKDHGYVLNARIYHSITKDQKISVPPELL.

The N-terminal 27 residues, 1-27 (MLFSRASKIRVSQLMRRLQSTAVGRAA), are a transit peptide targeting the mitochondrion.

The protein localises to the mitochondrion. Functionally, may be involved in the control of meiotic sister-chromatid recombination. This is Meiotic sister-chromatid recombination protein 6, mitochondrial (MSC6) from Eremothecium gossypii (strain ATCC 10895 / CBS 109.51 / FGSC 9923 / NRRL Y-1056) (Yeast).